A 512-amino-acid polypeptide reads, in one-letter code: Probable metalloreductase AIM14 (512 aa).

7 helical membrane-spanning segments follow: residues 20 to 40 (IKYGYIVLGFSVVHIIGILIC), 61 to 81 (PLFISIIAWTLILIGLGVFHV), 97 to 117 (MSYALLPFDIFLVLRPNSIGL), 132 to 152 (VIIAGAIIHGVGYFIKWILEG), 161 to 181 (LWNFLGIVVFMLNLILIIISL), 191 to 211 (YFYVVHNITVWLFVGLICLHA), and 218 to 235 (YAIACASLLGLQIFERYA). The 113-residue stretch at 94–206 (FGRMSYALLP…NITVWLFVGL (113 aa)) folds into the Ferric oxidoreductase domain. Residues 230–355 (IFERYAKSHS…GGSGISFALP (126 aa)) enclose the FAD-binding FR-type domain. Over residues 427–436 (ESLPSSETPS) the composition is skewed to low complexity. The disordered stretch occupies residues 427 to 451 (ESLPSSETPSRTVNDDSLSQDTRPK). The segment covering 437–447 (RTVNDDSLSQD) has biased composition (polar residues).

It belongs to the ferric reductase (FRE) family. AIM14 subfamily.

The protein localises to the membrane. Its function is as follows. Probable cell surface metalloreductase. May be involved in iron or copper homeostasis. This chain is Probable metalloreductase AIM14 (AIM14), found in Debaryomyces hansenii (strain ATCC 36239 / CBS 767 / BCRC 21394 / JCM 1990 / NBRC 0083 / IGC 2968) (Yeast).